The following is a 558-amino-acid chain: T-complex protein 1 subunit eta (558 aa).

The disordered stretch occupies residues 524 to 558; sequence VRNPKSEQPKAPPGGLRRGGPQGMAGLAKNARLGK.

It belongs to the TCP-1 chaperonin family. Heterooligomeric complex of about 850 to 900 kDa that forms two stacked rings, 12 to 16 nm in diameter.

The protein localises to the cytoplasm. Its function is as follows. Molecular chaperone; assists the folding of proteins upon ATP hydrolysis. Known to play a role, in vitro, in the folding of actin and tubulin. This Tetrahymena pyriformis protein is T-complex protein 1 subunit eta.